The sequence spans 437 residues: Xylose isomerase (437 aa).

Residues His101 and Asp104 contribute to the active site. 7 residues coordinate Mg(2+): Glu232, Glu268, His271, Asp296, Asp307, Asp309, and Asp339.

Belongs to the xylose isomerase family. In terms of assembly, homotetramer. Mg(2+) serves as cofactor.

It is found in the cytoplasm. It catalyses the reaction alpha-D-xylose = alpha-D-xylulofuranose. The sequence is that of Xylose isomerase from Mannheimia succiniciproducens (strain KCTC 0769BP / MBEL55E).